Here is a 421-residue protein sequence, read N- to C-terminus: MTVDRFYIHGPTPLSGEVNISGAKNSALPILFATLLTEEPVEIFNVPKLKDIDVTIKLLTQLGAKVDHCDVVFVDTSSVNTCCASYDLVKSMRASIWALGPLVARFGEGKIWLPGGCSIGKRLVDLHVNGLEQLGATIILEEEYVTASVNGRLHGAHIIMDKISVGATVTIMSAAALAEGVTIIDNAAREPEIVDTANFLIMLGTNINGAGSNRITIEGAQKLGGGKYSIMPDRIETGTFLVAAAVSRTNVVCLGSRPDTLRFVIKKLRESGADINMGKDWIGLNMHGKRPKAVTVCTKPYPGFPTDMQAQFTLLNIVSKGKGKIIETIFENRFMHVPELVRMGARIKILNNMIVCHGVDSLIGTQVMATDLRASASLVLAGCIAEGLTIVDCVYHIDRGYDHIEKKLRNMGAHIKRVTNK.

24-25 (KN) is a phosphoenolpyruvate binding site. R93 serves as a coordination point for UDP-N-acetyl-alpha-D-glucosamine. C117 functions as the Proton donor in the catalytic mechanism. C117 is modified (2-(S-cysteinyl)pyruvic acid O-phosphothioketal). D307 and I329 together coordinate UDP-N-acetyl-alpha-D-glucosamine.

It belongs to the EPSP synthase family. MurA subfamily.

It localises to the cytoplasm. The catalysed reaction is phosphoenolpyruvate + UDP-N-acetyl-alpha-D-glucosamine = UDP-N-acetyl-3-O-(1-carboxyvinyl)-alpha-D-glucosamine + phosphate. It functions in the pathway cell wall biogenesis; peptidoglycan biosynthesis. Cell wall formation. Adds enolpyruvyl to UDP-N-acetylglucosamine. The polypeptide is UDP-N-acetylglucosamine 1-carboxyvinyltransferase (Blochmanniella pennsylvanica (strain BPEN)).